Consider the following 1230-residue polypeptide: Cullin-associated NEDD8-dissociated protein 1 (1230 aa).

Position 2 is an N-acetylalanine (Ala2). 12 HEAT repeats span residues 2–39, 44–81, 83–119, 131–165, 171–208, 210–247, 248–282, 289–366, 370–407, 424–467, 471–510, and 515–552; these read ASAS…KDSI, DSER…KVKE, QVET…ELPP, CKKI…LSRQ, NFHP…SCGN, VFVD…QAGH, RIGE…FESF, EVYP…TRHE, EFYK…QTRP, PLTM…VLPG, QHIP…NHSP, and PHVQ…VIRP. At Lys55 the chain carries N6-acetyllysine. Residues 315–344 are disordered; it reads DEDEDENAMDADGGDDDDQGSDDEYSDDDD. At Ser335 the chain carries Phosphoserine. Ser558 is subject to Phosphoserine. 15 HEAT repeats span residues 563-602, 606-643, 646-683, 688-725, 729-768, 770-808, 809-845, 852-889, 890-927, 928-960, 961-998, 1002-1039, 1043-1097, 1099-1133, and 1140-1189; these read PYIK…NLGD, SDLP…LKID, PVLG…NYSD, AMID…VYPS, KISG…TGTN, LGYM…ALTR, ACPK…LGEV, SGQL…GNLP, EYLP…GLKP, YVEN…KLTL, IDPE…DHPQ, PLLK…NKPS, DLLD…DSCL, RLDI…LSTL, and QRLD…IPEA. An N6-acetyllysine modification is found at Lys971.

It belongs to the CAND family. In terms of assembly, interacts with TBP. Part of a complex that contains CUL1 and RBX1. Interacts with unneddylated cullins: interacts with CUL1, CUL2, CUL3, CUL4A, CUL4B and CUL5. Does not bind neddylated CUL1. Interaction with cullins is abolished in presence of COMMD1, which antagonizes with CAND1 for interacting with cullins. Interacts with ERCC6. Interacts with DCUN1D1, DCUN1D2, DCUN1D3, DCUN1D4 and DCUN1D5; these interactions are bridged by cullins and strongly inhibits the neddylation of cullins.

It localises to the cytoplasm. The protein resides in the nucleus. In terms of biological role, key assembly factor of SCF (SKP1-CUL1-F-box protein) E3 ubiquitin ligase complexes that promotes the exchange of the substrate-recognition F-box subunit in SCF complexes, thereby playing a key role in the cellular repertoire of SCF complexes. Acts as a F-box protein exchange factor. The exchange activity of CAND1 is coupled with cycles of neddylation conjugation: in the deneddylated state, cullin-binding CAND1 binds CUL1-RBX1, increasing dissociation of the SCF complex and promoting exchange of the F-box protein. Probably plays a similar role in other cullin-RING E3 ubiquitin ligase complexes. The protein is Cullin-associated NEDD8-dissociated protein 1 (CAND1) of Bos taurus (Bovine).